We begin with the raw amino-acid sequence, 184 residues long: MKNVTDPFLSLSYWPSAGSFGFNTDILATNPINLSVVLGVLIFFGKGVLSDLLDNRKQRILKTIRNSEELREGALEQLEKARSRLRKVEKEADQFRVNGYSEIEREKLNLINSTSKTLEQLENYKNETIHFEQQRAINEVRQRVFQQALEGALGTLNSCLNNELHLRTISTNIGMFGTMKEITD.

The helical transmembrane segment at 27–49 threads the bilayer; the sequence is LATNPINLSVVLGVLIFFGKGVL.

Belongs to the ATPase B chain family. In terms of assembly, F-type ATPases have 2 components, F(1) - the catalytic core - and F(0) - the membrane proton channel. F(1) has five subunits: alpha(3), beta(3), gamma(1), delta(1), epsilon(1). F(0) has four main subunits: a(1), b(1), b'(1) and c(10-14). The alpha and beta chains form an alternating ring which encloses part of the gamma chain. F(1) is attached to F(0) by a central stalk formed by the gamma and epsilon chains, while a peripheral stalk is formed by the delta, b and b' chains.

It is found in the plastid. It localises to the chloroplast thylakoid membrane. Its function is as follows. F(1)F(0) ATP synthase produces ATP from ADP in the presence of a proton or sodium gradient. F-type ATPases consist of two structural domains, F(1) containing the extramembraneous catalytic core and F(0) containing the membrane proton channel, linked together by a central stalk and a peripheral stalk. During catalysis, ATP synthesis in the catalytic domain of F(1) is coupled via a rotary mechanism of the central stalk subunits to proton translocation. Functionally, component of the F(0) channel, it forms part of the peripheral stalk, linking F(1) to F(0). The protein is ATP synthase subunit b, chloroplastic of Morus indica (Mulberry).